A 352-amino-acid polypeptide reads, in one-letter code: Ribosomal RNA large subunit methyltransferase M (352 aa).

Residues serine 184, alanine 217–glycine 220, aspartate 236, aspartate 256, and aspartate 272 contribute to the S-adenosyl-L-methionine site. The active-site Proton acceptor is the lysine 301.

It belongs to the class I-like SAM-binding methyltransferase superfamily. RNA methyltransferase RlmE family. RlmM subfamily. As to quaternary structure, monomer.

It localises to the cytoplasm. It carries out the reaction cytidine(2498) in 23S rRNA + S-adenosyl-L-methionine = 2'-O-methylcytidine(2498) in 23S rRNA + S-adenosyl-L-homocysteine + H(+). Catalyzes the 2'-O-methylation at nucleotide C2498 in 23S rRNA. The sequence is that of Ribosomal RNA large subunit methyltransferase M from Pseudomonas paraeruginosa (strain DSM 24068 / PA7) (Pseudomonas aeruginosa (strain PA7)).